A 210-amino-acid polypeptide reads, in one-letter code: Shikimate kinase (210 aa).

34 to 39 (GAGKSV) lines the ATP pocket. Position 38 (Ser38) interacts with Mg(2+). Asp56, Arg80, and Gly102 together coordinate substrate. Residue Arg140 participates in ATP binding. Residue Arg159 participates in substrate binding.

Belongs to the shikimate kinase family. Monomer. Mg(2+) is required as a cofactor.

Its subcellular location is the cytoplasm. It carries out the reaction shikimate + ATP = 3-phosphoshikimate + ADP + H(+). Its pathway is metabolic intermediate biosynthesis; chorismate biosynthesis; chorismate from D-erythrose 4-phosphate and phosphoenolpyruvate: step 5/7. Functionally, catalyzes the specific phosphorylation of the 3-hydroxyl group of shikimic acid using ATP as a cosubstrate. This is Shikimate kinase from Bartonella quintana (strain Toulouse) (Rochalimaea quintana).